The primary structure comprises 202 residues: Small ribosomal subunit protein uS4 (202 aa).

The S4 RNA-binding domain maps to 94–157 (SRLDSLVYRA…LEMPLIKNTL (64 aa)).

This sequence belongs to the universal ribosomal protein uS4 family. In terms of assembly, part of the 30S ribosomal subunit. Contacts protein S5. The interaction surface between S4 and S5 is involved in control of translational fidelity.

Its function is as follows. One of the primary rRNA binding proteins, it binds directly to 16S rRNA where it nucleates assembly of the body of the 30S subunit. Functionally, with S5 and S12 plays an important role in translational accuracy. The polypeptide is Small ribosomal subunit protein uS4 (Ureaplasma urealyticum serovar 10 (strain ATCC 33699 / Western)).